The primary structure comprises 574 residues: Adenine deaminase (574 aa).

Belongs to the metallo-dependent hydrolases superfamily. Adenine deaminase family. Mn(2+) serves as cofactor.

The catalysed reaction is adenine + H2O + H(+) = hypoxanthine + NH4(+). The chain is Adenine deaminase from Thermosipho africanus (strain TCF52B).